A 465-amino-acid chain; its full sequence is tRNA (guanine(37)-N(1))-methyltransferase (465 aa).

S-adenosyl-L-methionine is bound by residues H189, 227–228 (DL), and 255–256 (DA). The segment at 283-362 (YPKEGVPANE…GPGPPPSKPW (80 aa)) is disordered. Polar residues predominate over residues 291–320 (NENSSSNGNHNDVREGSQNGANESSVASTT). Basic residues predominate over residues 343–352 (TKRRNNKRVR). Residue N371 participates in S-adenosyl-L-methionine binding.

It belongs to the class I-like SAM-binding methyltransferase superfamily. TRM5/TYW2 family. As to quaternary structure, monomer.

The protein resides in the mitochondrion matrix. It is found in the nucleus. The protein localises to the cytoplasm. It carries out the reaction guanosine(37) in tRNA + S-adenosyl-L-methionine = N(1)-methylguanosine(37) in tRNA + S-adenosyl-L-homocysteine + H(+). Its function is as follows. Specifically methylates the N1 position of guanosine-37 in various cytoplasmic and mitochondrial tRNAs. Methylation is not dependent on the nature of the nucleoside 5' of the target nucleoside. This is the first step in the biosynthesis of wybutosine (yW), a modified base adjacent to the anticodon of tRNAs and required for accurate decoding. In Sorghum bicolor (Sorghum), this protein is tRNA (guanine(37)-N(1))-methyltransferase.